The chain runs to 649 residues: Macrolide export ATP-binding/permease protein MacB (649 aa).

One can recognise an ABC transporter domain in the interval Ile-7–Leu-245. Gly-43–Ser-50 provides a ligand contact to ATP. The next 4 helical transmembrane spans lie at Leu-276 to Gly-296, Ile-529 to Val-549, Leu-582 to Phe-602, and Phe-612 to Phe-632.

The protein belongs to the ABC transporter superfamily. Macrolide exporter (TC 3.A.1.122) family. In terms of assembly, homodimer. Part of the tripartite efflux system MacAB-TolC, which is composed of an inner membrane transporter, MacB, a periplasmic membrane fusion protein, MacA, and an outer membrane component, TolC. The complex forms a large protein conduit and can translocate molecules across both the inner and outer membranes. Interacts with MacA.

It localises to the cell inner membrane. Part of the tripartite efflux system MacAB-TolC. MacB is a non-canonical ABC transporter that contains transmembrane domains (TMD), which form a pore in the inner membrane, and an ATP-binding domain (NBD), which is responsible for energy generation. Confers resistance against macrolides. The sequence is that of Macrolide export ATP-binding/permease protein MacB from Pasteurella multocida (strain Pm70).